A 210-amino-acid polypeptide reads, in one-letter code: Orotate phosphoribosyltransferase (210 aa).

5-phospho-alpha-D-ribose 1-diphosphate is bound by residues Arg94, Lys98, His100, and Glu120–Ser128. Ser124 contributes to the orotate binding site.

This sequence belongs to the purine/pyrimidine phosphoribosyltransferase family. PyrE subfamily. As to quaternary structure, homodimer. Requires Mg(2+) as cofactor.

The enzyme catalyses orotidine 5'-phosphate + diphosphate = orotate + 5-phospho-alpha-D-ribose 1-diphosphate. Its pathway is pyrimidine metabolism; UMP biosynthesis via de novo pathway; UMP from orotate: step 1/2. Catalyzes the transfer of a ribosyl phosphate group from 5-phosphoribose 1-diphosphate to orotate, leading to the formation of orotidine monophosphate (OMP). This is Orotate phosphoribosyltransferase from Halalkalibacterium halodurans (strain ATCC BAA-125 / DSM 18197 / FERM 7344 / JCM 9153 / C-125) (Bacillus halodurans).